Here is a 417-residue protein sequence, read N- to C-terminus: Sterile alpha motif domain-containing protein 14 (417 aa).

Residues 37-306 are disordered; sequence LLVKGRRHRP…QETKCSYPYH (270 aa). Positions 40–49 are enriched in basic residues; sequence KGRRHRPSRS. Ser-84 and Ser-108 each carry phosphoserine. Low complexity predominate over residues 138–153; that stretch reads SGSPPRSAPSSDSSPS. The span at 159 to 173 shows a compositional bias: basic and acidic residues; that stretch reads PRAEPHSEDDSRDAS. Ser-173 and Ser-179 each carry phosphoserine. Low complexity-rich tracts occupy residues 244 to 260 and 276 to 289; these read SGKG…PTCS and STLS…SSSP. The residue at position 279 (Ser-279) is a Phosphoserine. A Phosphothreonine modification is found at Thr-283. Residues 326-389 form the SAM domain; it reads WTSQQVGQWL…KRKLKELAAA (64 aa). A coiled-coil region spans residues 375 to 416; that stretch reads DRALVKRKLKELAAAAEKERKAQEKTARQREKLRRREHEAKK. Residues 390–417 form a disordered region; it reads AEKERKAQEKTARQREKLRRREHEAKKS.

The polypeptide is Sterile alpha motif domain-containing protein 14 (Samd14) (Rattus norvegicus (Rat)).